The sequence spans 589 residues: Aspartate--tRNA ligase (589 aa).

Glu-175 is a binding site for L-aspartate. Positions 199-202 (QIFK) are aspartate. Arg-221 serves as a coordination point for L-aspartate. Residues 221 to 223 (RDE) and Gln-230 each bind ATP. Position 449 (His-449) interacts with L-aspartate. Glu-483 serves as a coordination point for ATP. Residue Arg-490 coordinates L-aspartate. 535–538 (GLDR) contacts ATP.

The protein belongs to the class-II aminoacyl-tRNA synthetase family. Type 1 subfamily. As to quaternary structure, homodimer.

The protein localises to the cytoplasm. It carries out the reaction tRNA(Asp) + L-aspartate + ATP = L-aspartyl-tRNA(Asp) + AMP + diphosphate. Functionally, catalyzes the attachment of L-aspartate to tRNA(Asp) in a two-step reaction: L-aspartate is first activated by ATP to form Asp-AMP and then transferred to the acceptor end of tRNA(Asp). The polypeptide is Aspartate--tRNA ligase (Shouchella clausii (strain KSM-K16) (Alkalihalobacillus clausii)).